Reading from the N-terminus, the 305-residue chain is MENSQLCKLFIGGLNVQTSESGLRGHFEAFGTLTDCVVVVNPQTKRSRCFGFVTYSNVEEADAAMAASPHAVDGNTVELKRAVSREDSARPGAHAKVKKLFVGGLKGDVAEGDLIEHFSQFGAVEKAEIIADKQSGKKRGFGFVYFQSHDAADKAAVVKFHPIQGHRVEVKKAVPKEDIHAGGGGARAARGGRGGGRGRGGGGGGGGRDQNGLAKGGGGGGGGYNSYGGYGGYGAYGGGGGGGGSYGGSDYGNGFGGFGSYSQHQSSYGPMKSGGGGGGGGSWGGRSNSGPYRGGYGGGYGGGSF.

At M1 the chain carries N-acetylmethionine. Residues 7–86 (CKLFIGGLNV…VELKRAVSRE (80 aa)) form the RRM 1 domain. S68 bears the Phosphoserine mark. K80 participates in a covalent cross-link: Glycyl lysine isopeptide (Lys-Gly) (interchain with G-Cter in SUMO2). S84 bears the Phosphoserine; by MAPKAPK2 mark. Glycyl lysine isopeptide (Lys-Gly) (interchain with G-Cter in SUMO2) cross-links involve residues K96, K98, K99, and K106. The RRM 2 domain occupies 98–175 (KKLFVGGLKG…HRVEVKKAVP (78 aa)). The residue at position 133 (K133) is an N6-acetyllysine. An Omega-N-methylarginine modification is found at R139. Residues K154, K159, K172, and K176 each participate in a glycyl lysine isopeptide (Lys-Gly) (interchain with G-Cter in SUMO2) cross-link. Disordered regions lie at residues 178–211 (DIHAGGGGARAARGGRGGGRGRGGGGGGGGRDQN) and 265–305 (QSSY…GGSF). Gly residues-rich tracts occupy residues 181–211 (AGGGGARAARGGRGGGRGRGGGGGGGGRDQN) and 272–284 (KSGGGGGGGGSWG). An Omega-N-methylarginine modification is found at R286. A compositionally biased stretch (gly residues) spans 292–305 (YRGGYGGGYGGGSF). Residue R293 is modified to Asymmetric dimethylarginine; alternate. R293 is subject to Dimethylated arginine; alternate. An Omega-N-methylarginine; alternate modification is found at R293.

Post-translationally, phosphorylated at Ser-84 by MAPKAPK2 in response to LPS treatment, promoting stabilization of GADD45A mRNA. In terms of processing, arg-293 is dimethylated, probably to asymmetric dimethylarginine.

The protein resides in the nucleus. Functionally, mRNA-binding component of ribonucleosomes. Specifically binds AU-rich element (ARE)-containing mRNAs. Involved in post-transcriptional regulation of cytokines mRNAs. This is Heterogeneous nuclear ribonucleoprotein A0 (Hnrnpa0) from Mus musculus (Mouse).